Here is a 158-residue protein sequence, read N- to C-terminus: NADH-quinone oxidoreductase subunit B (158 aa).

Positions 37, 38, 102, and 132 each coordinate [4Fe-4S] cluster.

This sequence belongs to the complex I 20 kDa subunit family. In terms of assembly, NDH-1 is composed of 14 different subunits. Subunits NuoB, C, D, E, F, and G constitute the peripheral sector of the complex. [4Fe-4S] cluster serves as cofactor.

The protein localises to the cell inner membrane. It catalyses the reaction a quinone + NADH + 5 H(+)(in) = a quinol + NAD(+) + 4 H(+)(out). NDH-1 shuttles electrons from NADH, via FMN and iron-sulfur (Fe-S) centers, to quinones in the respiratory chain. Couples the redox reaction to proton translocation (for every two electrons transferred, four hydrogen ions are translocated across the cytoplasmic membrane), and thus conserves the redox energy in a proton gradient. The chain is NADH-quinone oxidoreductase subunit B from Aromatoleum aromaticum (strain DSM 19018 / LMG 30748 / EbN1) (Azoarcus sp. (strain EbN1)).